A 224-amino-acid polypeptide reads, in one-letter code: CRP-like cAMP-activated global transcriptional regulator (224 aa).

3',5'-cyclic AMP is bound by residues 64 to 70 (GRENLLT), 79 to 82 (GELS), 89 to 90 (RT), 134 to 135 (TN), 142 to 143 (IF), and 178 to 188 (EEIAQLVGASR). In terms of domain architecture, HTH crp-type spans 144–217 (TDVPGRVAKQ…GKSVLISDSE (74 aa)). The H-T-H motif DNA-binding region spans 177 to 196 (QEEIAQLVGASRETVNKALA).

As to quaternary structure, homodimer.

Its function is as follows. Global transcriptional regulator that complexes with cAMP and binds to specific DNA promoter sites, causing DNA-bending, to regulate transcription. cAMP improves binding to specific DNA sequences, probably by altering protein conformation. Activates expression of whiB1. This chain is CRP-like cAMP-activated global transcriptional regulator, found in Mycobacterium tuberculosis (strain CDC 1551 / Oshkosh).